We begin with the raw amino-acid sequence, 610 residues long: UvrABC system protein C (610 aa).

A GIY-YIG domain is found at 12-91; that stretch reads TSPGVYLYKN…IKQKKPRFNI (80 aa). The 36-residue stretch at 202–237 folds into the UVR domain; it reads SDLKQSLTARMNKAAEGMQFELAAKYRDLITTVEDL.

Belongs to the UvrC family. Interacts with UvrB in an incision complex.

It localises to the cytoplasm. The UvrABC repair system catalyzes the recognition and processing of DNA lesions. UvrC both incises the 5' and 3' sides of the lesion. The N-terminal half is responsible for the 3' incision and the C-terminal half is responsible for the 5' incision. The protein is UvrABC system protein C of Koribacter versatilis (strain Ellin345).